The sequence spans 104 residues: AVIToxin-VAR2 (104 aa).

The N-terminal stretch at 1–19 (MRSLLCAPLLLLLLSAGES) is a signal peptide. Intrachain disulfides connect cysteine 26–cysteine 38, cysteine 32–cysteine 50, cysteine 37–cysteine 78, cysteine 60–cysteine 86, and cysteine 80–cysteine 96.

Belongs to the AVIT (prokineticin) family. As to expression, expressed by the venom gland.

Its subcellular location is the secreted. Potent agonist for both PKR1/PROKR1 and PKR2/PROKR2. Potently contracts gastrointestinal (GI) smooth muscle. The sequence is that of AVIToxin-VAR2 from Varanus varius (Lace monitor lizard).